The chain runs to 356 residues: Protein MGF 360-3L (356 aa).

One copy of the ANK repeat lies at 61 to 93; the sequence is KLNTALVLAVKENNEDLIMLFTEWGANINYGLL.

This sequence belongs to the asfivirus MGF 360 family.

Its function is as follows. Plays a role in virus cell tropism, and may be required for efficient virus replication in macrophages. In African swine fever virus (isolate Warthog/Namibia/Wart80/1980) (ASFV), this protein is Protein MGF 360-3L.